The sequence spans 633 residues: Putative ankyrin repeat protein L774 (633 aa).

7 ANK repeats span residues Ile91–Pro120, Asn123–Ile152, Asn221–Phe250, Thr252–Ser275, Asp338–Asn367, Met369–Thr393, and Asp517–Asp546.

This Acanthamoeba polyphaga mimivirus (APMV) protein is Putative ankyrin repeat protein L774.